We begin with the raw amino-acid sequence, 64 residues long: Large ribosomal subunit protein bL35 (64 aa).

Disordered stretches follow at residues 1–20 (MPKAKTHSGASKRFRRTGTG) and 37–64 (PTKRTRRLAGRTQVSANDAPRINKMLNG).

The protein belongs to the bacterial ribosomal protein bL35 family.

This chain is Large ribosomal subunit protein bL35, found in Mycobacterium sp. (strain JLS).